The primary structure comprises 470 residues: 6-phospho-beta-galactosidase (470 aa).

D-galactose 6-phosphate-binding residues include glutamine 19, histidine 116, asparagine 159, glutamate 160, and asparagine 297. The active-site Proton donor is the glutamate 160. The Nucleophile role is filled by glutamate 375. 4 residues coordinate D-galactose 6-phosphate: serine 430, tryptophan 431, lysine 437, and tyrosine 439.

This sequence belongs to the glycosyl hydrolase 1 family.

The enzyme catalyses a 6-phospho-beta-D-galactoside + H2O = D-galactose 6-phosphate + an alcohol. Its pathway is carbohydrate metabolism; lactose degradation; D-galactose 6-phosphate and beta-D-glucose from lactose 6-phosphate: step 1/1. This chain is 6-phospho-beta-galactosidase, found in Staphylococcus aureus (strain MRSA252).